Reading from the N-terminus, the 227-residue chain is Cytochrome c oxidase subunit 2 (227 aa).

Residues 1-14 (MAYPFQLGLQDATS) lie on the Mitochondrial intermembrane side of the membrane. A helical transmembrane segment spans residues 15–45 (PIMEELLHFHDHTLMIVFLISSLVLYIISLM). The Mitochondrial matrix portion of the chain corresponds to 46–59 (LTTKLTHTSTMDAQ). The chain crosses the membrane as a helical span at residues 60 to 87 (EVETVWTILPAIILILIALPSLRILYMM). At 88–227 (DEINNPSLTV…YFETWSALMV (140 aa)) the chain is on the mitochondrial intermembrane side. Cu cation contacts are provided by H161, C196, E198, C200, H204, and M207. E198 contacts Mg(2+). Position 218 is a phosphotyrosine (Y218).

This sequence belongs to the cytochrome c oxidase subunit 2 family. In terms of assembly, component of the cytochrome c oxidase (complex IV, CIV), a multisubunit enzyme composed of 14 subunits. The complex is composed of a catalytic core of 3 subunits MT-CO1, MT-CO2 and MT-CO3, encoded in the mitochondrial DNA, and 11 supernumerary subunits COX4I, COX5A, COX5B, COX6A, COX6B, COX6C, COX7A, COX7B, COX7C, COX8 and NDUFA4, which are encoded in the nuclear genome. The complex exists as a monomer or a dimer and forms supercomplexes (SCs) in the inner mitochondrial membrane with NADH-ubiquinone oxidoreductase (complex I, CI) and ubiquinol-cytochrome c oxidoreductase (cytochrome b-c1 complex, complex III, CIII), resulting in different assemblies (supercomplex SCI(1)III(2)IV(1) and megacomplex MCI(2)III(2)IV(2)). Found in a complex with TMEM177, COA6, COX18, COX20, SCO1 and SCO2. Interacts with TMEM177 in a COX20-dependent manner. Interacts with COX20. Interacts with COX16. It depends on Cu cation as a cofactor.

Its subcellular location is the mitochondrion inner membrane. The enzyme catalyses 4 Fe(II)-[cytochrome c] + O2 + 8 H(+)(in) = 4 Fe(III)-[cytochrome c] + 2 H2O + 4 H(+)(out). Functionally, component of the cytochrome c oxidase, the last enzyme in the mitochondrial electron transport chain which drives oxidative phosphorylation. The respiratory chain contains 3 multisubunit complexes succinate dehydrogenase (complex II, CII), ubiquinol-cytochrome c oxidoreductase (cytochrome b-c1 complex, complex III, CIII) and cytochrome c oxidase (complex IV, CIV), that cooperate to transfer electrons derived from NADH and succinate to molecular oxygen, creating an electrochemical gradient over the inner membrane that drives transmembrane transport and the ATP synthase. Cytochrome c oxidase is the component of the respiratory chain that catalyzes the reduction of oxygen to water. Electrons originating from reduced cytochrome c in the intermembrane space (IMS) are transferred via the dinuclear copper A center (CU(A)) of subunit 2 and heme A of subunit 1 to the active site in subunit 1, a binuclear center (BNC) formed by heme A3 and copper B (CU(B)). The BNC reduces molecular oxygen to 2 water molecules using 4 electrons from cytochrome c in the IMS and 4 protons from the mitochondrial matrix. The sequence is that of Cytochrome c oxidase subunit 2 (MT-CO2) from Urocyon cinereoargenteus (Gray fox).